The primary structure comprises 253 residues: tRNA uridine(34) hydroxylase (253 aa).

A Rhodanese domain is found at 127–221 (HGRPLVLLDT…YFEDVGGEGY (95 aa)). The active-site Cysteine persulfide intermediate is the cysteine 181.

The protein belongs to the TrhO family.

It catalyses the reaction uridine(34) in tRNA + AH2 + O2 = 5-hydroxyuridine(34) in tRNA + A + H2O. Its function is as follows. Catalyzes oxygen-dependent 5-hydroxyuridine (ho5U) modification at position 34 in tRNAs. The chain is tRNA uridine(34) hydroxylase from Xanthomonas campestris pv. campestris (strain 8004).